The following is a 280-amino-acid chain: UPF0758 protein Atu1607 (280 aa).

The interval 1 to 22 (MAKRPALPSADLSPTSGFEAGE) is disordered. The MPN domain occupies 158-280 (VLGSWSSVID…HASFKGLRLI (123 aa)). Zn(2+) contacts are provided by histidine 229, histidine 231, and aspartate 242. A JAMM motif motif is present at residues 229-242 (HNHPSGDPTPSRAD).

The protein belongs to the UPF0758 family.

This chain is UPF0758 protein Atu1607, found in Agrobacterium fabrum (strain C58 / ATCC 33970) (Agrobacterium tumefaciens (strain C58)).